A 672-amino-acid polypeptide reads, in one-letter code: uncharacterized protein (672 aa).

An N-terminal signal peptide occupies residues 1–24; it reads MKTLKVLKIFIIVYISSVSLESFA. Transmembrane regions (helical) follow at residues 226–246 and 254–274; these read IIGA…ALNK and ITLF…LGPL. Residues 363-372 show a composition bias toward polar residues; it reads SNGTSGNNKP. Residues 363-384 are disordered; that stretch reads SNGTSGNNKPIPNFDPDGKKDR. Helical transmembrane passes span 410–430, 436–456, 469–489, and 562–582; these read IILV…LYFI, CMVT…MVLF, VCIS…LLIT, and VVSI…FYYF. Residues 628 to 646 show a composition bias toward basic and acidic residues; that stretch reads HGKSSLGDKPDIGNKRKDG. Positions 628 to 672 are disordered; sequence HGKSSLGDKPDIGNKRKDGAQQGEDAVNSSGGEVADLASGSGGGK.

The protein belongs to the TrbL/VirB6 family.

It localises to the cell membrane. This is an uncharacterized protein from Rickettsia prowazekii (strain Madrid E).